Here is an 89-residue protein sequence, read N- to C-terminus: Protein S100-A6 (89 aa).

EF-hand domains lie at 12–47 and 48–83; these read LVAI…IGAK and LQDA…LALI. Threonine 28 and glutamate 33 together coordinate Ca(2+). Lysine 40 is subject to N6-acetyllysine. Lysine 47 is subject to N6-acetyllysine; alternate. An N6-succinyllysine; alternate modification is found at lysine 47. Ca(2+)-binding residues include aspartate 61, asparagine 63, aspartate 65, glutamate 67, and glutamate 72.

It belongs to the S-100 family. Homodimer; head to tail assembly of 2 subunits. Interacts with CACYBP in a calcium-dependent manner. Interacts with ANXA2 and ANXA11 (via N-terminus). Interacts with SUGT1. Interacts with TP53; has higher affinity for TP53 that is phosphorylated on its N-terminal domain, and lower affinity for TP53 that is phosphorylated on its C-terminal domain. Interacts with tropomyosin. Interacts with FKBP4. Interacts with PPP5C (via TPR repeats); the interaction is calcium-dependent and modulates PPP5C activity. Interacts with TPPP; this interaction inhibits TPPP dimerization.

The protein localises to the nucleus envelope. Its subcellular location is the cytoplasm. It is found in the cell membrane. Its function is as follows. May function as calcium sensor and modulator, contributing to cellular calcium signaling. May function by interacting with other proteins, such as TPR-containing proteins, and indirectly play a role in many physiological processes such as the reorganization of the actin cytoskeleton and in cell motility. Binds 2 calcium ions. Calcium binding is cooperative. This chain is Protein S100-A6 (S100a6), found in Rattus norvegicus (Rat).